The following is a 130-amino-acid chain: Small ribosomal subunit protein uS11 (130 aa).

A disordered region spans residues 109-130; it reads EDITPIPHDGTGRPGGKRGRRV.

Belongs to the universal ribosomal protein uS11 family. Part of the 30S ribosomal subunit.

Its function is as follows. Located on the platform of the 30S subunit. The sequence is that of Small ribosomal subunit protein uS11 from Methanobrevibacter smithii (strain ATCC 35061 / DSM 861 / OCM 144 / PS).